The sequence spans 199 residues: Protein p2 (199 aa).

The protein resides in the host cytoplasm. In Avena sativa (Oat), this protein is Protein p2.